Here is a 496-residue protein sequence, read N- to C-terminus: Glycylpeptide N-tetradecanoyltransferase 1 (496 aa).

Residues 1–82 form a disordered region; that stretch reads MADESETAVK…STQDQPVKMT (82 aa). Residues S31 and S47 each carry the phosphoserine modification. Basic residues predominate over residues 55 to 66; the sequence is KKKKKKQKKKKE. S83 is subject to Phosphoserine. The tetradecanoyl-CoA site is built by Q118, F119, W120, F247, L248, C249, V250, S256, R258, V259, and A260.

The protein belongs to the NMT family. Ubiquitous.

The protein resides in the cytoplasm. Its subcellular location is the cytosol. It localises to the membrane. The catalysed reaction is N-terminal glycyl-[protein] + tetradecanoyl-CoA = N-tetradecanoylglycyl-[protein] + CoA + H(+). The enzyme catalyses N-terminal glycyl-L-lysyl-[protein] + tetradecanoyl-CoA = N-terminal glycyl-(N(6)-tetradecanoyl)-L-lysyl-[protein] + CoA + H(+). Adds a myristoyl group to the N-terminal glycine residue of certain cellular and viral proteins. Also able to mediate N-terminal lysine myristoylation of proteins: catalyzes myristoylation of ARF6 on both 'Gly-2' and 'Lys-3'. Lysine myristoylation is required to maintain ARF6 on membranes during the GTPase cycle. Required for normal embryogenesis. The chain is Glycylpeptide N-tetradecanoyltransferase 1 from Mus musculus (Mouse).